The primary structure comprises 91 residues: Anther-specific protein RTS (91 aa).

A signal peptide spans 1-21 (MVRVGAAAAVLVLAAAAAAMA).

In terms of biological role, required for tapetum and pollen development. In Oryza sativa subsp. japonica (Rice), this protein is Anther-specific protein RTS.